Consider the following 196-residue polypeptide: Putative archaetidylserine decarboxylase proenzyme (196 aa).

Residue Ser-164 is the Schiff-base intermediate with substrate; via pyruvic acid of the active site. Ser-164 is modified (pyruvic acid (Ser); by autocatalysis).

It belongs to the phosphatidylserine decarboxylase family. PSD-A subfamily. Heterodimer of a large membrane-associated beta subunit and a small pyruvoyl-containing alpha subunit. The cofactor is pyruvate. Post-translationally, is synthesized initially as an inactive proenzyme. Formation of the active enzyme involves a self-maturation process in which the active site pyruvoyl group is generated from an internal serine residue via an autocatalytic post-translational modification. Two non-identical subunits are generated from the proenzyme in this reaction, and the pyruvate is formed at the N-terminus of the alpha chain, which is derived from the carboxyl end of the proenzyme. The post-translation cleavage follows an unusual pathway, termed non-hydrolytic serinolysis, in which the side chain hydroxyl group of the serine supplies its oxygen atom to form the C-terminus of the beta chain, while the remainder of the serine residue undergoes an oxidative deamination to produce ammonia and the pyruvoyl prosthetic group on the alpha chain.

The protein resides in the cell membrane. The catalysed reaction is archaetidylserine + H(+) = archaetidylethanolamine + CO2. Catalyzes the formation of archaetidylethanolamine (PtdEtn) from archaetidylserine (PtdSer). The polypeptide is Putative archaetidylserine decarboxylase proenzyme (Halobacterium salinarum (strain ATCC 700922 / JCM 11081 / NRC-1) (Halobacterium halobium)).